A 91-amino-acid polypeptide reads, in one-letter code: Early E3B 10.4 kDa protein (91 aa).

Residues 1-22 (MIPRVLILLTLVALFCACSTLA) form the signal peptide. At 23–34 (AVAHIEVDCIPP) the chain is on the lumenal side. The chain crosses the membrane as a helical span at residues 35-60 (FTVYLLYGFVTLILICSLVTVVIAFI). Topologically, residues 61–91 (QFIDWICVRIAYLRHHPQYRDRTIADLLRIL) are cytoplasmic.

The protein belongs to the adenoviridae E3B family.

The protein resides in the host endoplasmic reticulum membrane. In terms of biological role, down-regulates the EGF receptor. This is Early E3B 10.4 kDa protein from Homo sapiens (Human).